A 357-amino-acid chain; its full sequence is Isoflavone 7-O-methyltransferase (357 aa).

Residues 200-203 (VGGG), Asp224, 224-225 (DR), 244-245 (DM), and Lys258 contribute to the S-adenosyl-L-methionine site. The Proton acceptor role is filled by His262.

This sequence belongs to the class I-like SAM-binding methyltransferase superfamily. Cation-independent O-methyltransferase family. COMT subfamily.

It carries out the reaction a 7-hydroxyisoflavone + S-adenosyl-L-methionine = a 7-methoxyisoflavone + S-adenosyl-L-homocysteine + H(+). In terms of biological role, 7-O-methyltransferase involved in the biosynthesis of isoformononetin. Can use daidzein as substrate, but not medicarpin or 2,7,4'-trihydroxyisoflavanone. The polypeptide is Isoflavone 7-O-methyltransferase (D7OMT) (Glycyrrhiza echinata (Licorice)).